Consider the following 222-residue polypeptide: Millepora cytotoxin-1 (222 aa).

A signal peptide spans 1 to 20 (MVTLYLHVPILLLVVITARA). Positions 21–75 (APKPDTHNPFDELSSVAEKQDLHYGDRSRKDPFIAQNDVGNNFRDGTQENLTKVR) are excised as a propeptide. 3 disulfide bridges follow: cysteine 89–cysteine 115, cysteine 142–cysteine 168, and cysteine 179–cysteine 222. Repeats lie at residues 100–109 (SIHDNHYEDR), 153–162 (SIHDNYYEDR), and 206–215 (SQHNNYYEDR).

It belongs to the dermatopontin family. In terms of processing, is not glycosylated.

The protein resides in the secreted. It is found in the nematocyst. Its function is as follows. Is potently cytotoxic (EC(50) value 79 ng/mL) towards L1210 mouse leukemia cells, has hemagglutination activity on sheep erythrocytes, and is lethal in crayfish. Has no phospholipase A2 activity. The chain is Millepora cytotoxin-1 from Millepora dichotoma (Net fire coral).